Here is a 745-residue protein sequence, read N- to C-terminus: Probable xyloglucan glycosyltransferase 3 (745 aa).

Transmembrane regions (helical) follow at residues 116–136 (GFLLLSLAMLAFETVAHLKGW) and 196–216 (IDYIAWAIQKLSGFCIALFMV). Aspartate 300 is an active-site residue. Residues aspartate 359 and aspartate 361 each coordinate substrate. Residue aspartate 453 is part of the active site. Helical transmembrane passes span 531-551 (LILPFYSFTLFCVILPLTMFV), 556-576 (LPIWVICYVPVIMSVLNILPA), 695-715 (IFKKELALAFLLLTAATRSLL), and 720-740 (LHFYFLLFQGVTFLAVGLDLI).

This sequence belongs to the glycosyltransferase 2 family. Plant cellulose synthase-like C subfamily.

The protein resides in the golgi apparatus membrane. Probable beta-1,4-glucan synthase rather involved in the synthesis of the xyloglucan backbone than cellulose. Seems to work simultaneously with xyloglucan 6-xylosyltransferase. Xyloglucan is a noncellulosic polysaccharides of plant cell wall and consists of a glucan backbone substituted by xylose, galactose and fucose. In Oryza sativa subsp. japonica (Rice), this protein is Probable xyloglucan glycosyltransferase 3 (CSLC3).